The primary structure comprises 594 residues: UvrABC system protein C (594 aa).

One can recognise a GIY-YIG domain in the interval 15–92; the sequence is DKPGCYQMKN…IQKFQPYYNI (78 aa). One can recognise a UVR domain in the interval 197–232; the sequence is AKIKQSLQTKMQKASEAMEFERAADIRDQIHYIEVT.

The protein belongs to the UvrC family. Interacts with UvrB in an incision complex.

The protein localises to the cytoplasm. In terms of biological role, the UvrABC repair system catalyzes the recognition and processing of DNA lesions. UvrC both incises the 5' and 3' sides of the lesion. The N-terminal half is responsible for the 3' incision and the C-terminal half is responsible for the 5' incision. In Pediococcus pentosaceus (strain ATCC 25745 / CCUG 21536 / LMG 10740 / 183-1w), this protein is UvrABC system protein C.